Here is a 283-residue protein sequence, read N- to C-terminus: Pseudokinase OPG198 (283 aa).

ATP is bound by residues methionine 1 and lysine 30. The 283-residue stretch at 1–283 folds into the Protein kinase domain; that stretch reads MESFKYCFDN…DRLRRLFIQD (283 aa).

The protein belongs to the protein kinase superfamily. Ser/Thr protein kinase family. Poxviruses subfamily. Interacts with B1/VPK1. Interacts with host VRK1. Interacts with host VRK2.

It localises to the host nucleus. With respect to regulation, both catalytically active kinases B1/VPK1 and host VRK2 repress B12 inhibitory activity in a B1/VPK1 deletion mutant strain. Its function is as follows. Pseudokinase that plays a role in viral DNA replication repression by activating the antiviral protein BANF1 and inhibiting the activity of host VRK1, a cellular modulator of BANF1. This chain is Pseudokinase OPG198 (OPG198), found in Vaccinia virus (strain Ankara) (VACV).